The chain runs to 354 residues: Peptide chain release factor 1 (354 aa).

Q230 is subject to N5-methylglutamine.

Belongs to the prokaryotic/mitochondrial release factor family. In terms of processing, methylated by PrmC. Methylation increases the termination efficiency of RF1.

The protein resides in the cytoplasm. Its function is as follows. Peptide chain release factor 1 directs the termination of translation in response to the peptide chain termination codons UAG and UAA. The sequence is that of Peptide chain release factor 1 from Rhodospirillum rubrum (strain ATCC 11170 / ATH 1.1.1 / DSM 467 / LMG 4362 / NCIMB 8255 / S1).